Consider the following 102-residue polypeptide: Cytochrome b (102 aa).

The next 3 helical transmembrane spans lie at 1–21, 45–66, and 81–101; these read FGSL…FLAM, WLIR…YMHI, and WNIG…GYVF. The heme b site is built by histidine 51 and histidine 65.

Belongs to the cytochrome b family. In terms of assembly, the cytochrome bc1 complex contains 3 respiratory subunits (MT-CYB, CYC1 and UQCRFS1), 2 core proteins (UQCRC1 and UQCRC2) and probably 6 low-molecular weight proteins. The cofactor is heme b.

The protein resides in the mitochondrion inner membrane. In terms of biological role, component of the ubiquinol-cytochrome c reductase complex (complex III or cytochrome b-c1 complex) that is part of the mitochondrial respiratory chain. The b-c1 complex mediates electron transfer from ubiquinol to cytochrome c. Contributes to the generation of a proton gradient across the mitochondrial membrane that is then used for ATP synthesis. The polypeptide is Cytochrome b (mt-cyb) (Plethodon yonahlossee (Yonahlossee salamander)).